A 741-amino-acid chain; its full sequence is MSKMRVYEYAKKQNVPSKDVIHKLKEMNIEVNNHMAMLEADVVEKLDHQYRPKAEKKTETKNEKKAEKKTDKPKRPMPAKTADFSDEEIFDDVKEAAKPAKKKGAAKGKETKRTEAQQQEKKAFQAAKKKGKGPAKGKKQAAPAAKQVPQPAKKEKELPKKITFEGSLTVAELAKKLGREPSEIIKKLFMLGVMATINQDLDKDAIELICSDYGVEVEEKVTIDETNFEAIEIADAPEDLVERPPVVTIMGHVDHGKTTLLDAIRHSKVTEQEAGGITQHIGAYQVTVNDKKITFLDTPGHEAFTTMRARGRQVTDIVILVVAADDGVMPQTVEAINHAKAANVPIIVAINKMDKPEANPDRVMQELMEYNLVPEEWGGDTIFCKLSAKTKEGLDHLLEMILLVSEMEELKANPNRRAVGTVIEAKLDKGRGPVATLLVQAGTLKVGDPIVVGTTYGRVRAMVNDSGRRVKEAGPSMPVEITGLHDVPQAGDRFMVFEDEKKARQIGEARAQRQLQEQRSVKTRVSLDDLFEQIKQGEMKELNLIVKADVQGSVEALVAALQKIDVEGVRVKIIHAAVGAITESDISLATASNAIVIGFNVRPDANAKRAAESEKVDIRLHRIIYNVIEEIEAAMKGMLDPEYEEKVIGQAEVRQTFKVSKVGTIAGCYVTDGKITRDSKVRLIRQGIVVYEGEIDSLKRYKDDVREVAQGYECGLTIKNFNDIKEGDVIEAYVMQEVARA.

Basic and acidic residues-rich tracts occupy residues 48 to 74 (HQYR…DKPK) and 107 to 123 (KGKE…EKKA). The segment at 48–158 (HQYRPKAEKK…PQPAKKEKEL (111 aa)) is disordered. Basic residues predominate over residues 127–139 (AKKKGKGPAKGKK). Residues 140-151 (QAAPAAKQVPQP) show a composition bias toward low complexity. The tr-type G domain occupies 242–411 (ERPPVVTIMG…LLVSEMEELK (170 aa)). The tract at residues 251 to 258 (GHVDHGKT) is G1. Position 251 to 258 (251 to 258 (GHVDHGKT)) interacts with GTP. The G2 stretch occupies residues 276–280 (GITQH). The G3 stretch occupies residues 297–300 (DTPG). Residues 297–301 (DTPGH) and 351–354 (NKMD) contribute to the GTP site. The G4 stretch occupies residues 351–354 (NKMD). Residues 387–389 (SAK) form a G5 region.

The protein belongs to the TRAFAC class translation factor GTPase superfamily. Classic translation factor GTPase family. IF-2 subfamily.

It localises to the cytoplasm. Its function is as follows. One of the essential components for the initiation of protein synthesis. Protects formylmethionyl-tRNA from spontaneous hydrolysis and promotes its binding to the 30S ribosomal subunits. Also involved in the hydrolysis of GTP during the formation of the 70S ribosomal complex. The sequence is that of Translation initiation factor IF-2 (infB) from Geobacillus stearothermophilus (Bacillus stearothermophilus).